The primary structure comprises 252 residues: Short-chain dehydrogenase/reductase eriH (252 aa).

8 residues coordinate NADP(+): Ile16, Asp65, Asn92, Lys125, Tyr158, Lys162, Val191, and Thr193. Catalysis depends on Tyr158, which acts as the Proton acceptor. The active-site Proton donor is Tyr158. Lys162 functions as the Lowers pKa of active site Tyr in the catalytic mechanism.

This sequence belongs to the short-chain dehydrogenases/reductases (SDR) family.

The enzyme catalyses cyathadiol + reduced [NADPH--hemoprotein reductase] + O2 = cyathatriol + oxidized [NADPH--hemoprotein reductase] + H2O + H(+). It catalyses the reaction 11-O-acetylcyathatriol + A = 11-O-acetylcyathin A3 + AH2. It carries out the reaction cyathatriol + A = cyathin A3 + AH2. It functions in the pathway secondary metabolite biosynthesis. In terms of biological role, short-chain dehydrogenase/reductase; part of the gene cluster that mediates the biosynthesis of erinacines, cyathane-xylosides that show unique biological activities, including leishmanicidal activity, stimulating activity for nerve growth-factor synthesis, and agonistic activity toward the kappa opioid receptor. Within the pathway, eriH works with eriA to catalyze C-11 hydroxylation of cyathadiol to produce cyathatriol. EriH also catalyzes oxidation of 11-O-acetyl-cyathatriol into 1-O-acetylcyathin A3. In the absence of eriL and eriJ, the SDR eriH is able to convert cyathatriol to cyathin A3; this is likely a switching mechanism in the biosynthesis of cyathins (C-14 ketogroup)and erinacines (C-14 glycosylated group). The first step of the erinacines biosynthesis pathway is catalyzed by the geranylgeranyl diphosphate (GGPP) synthase eriE via conversion of farnesyl pyrophosphate and isopentyl pyrophosphate into geranylgeranyl pyrophosphate (GGPP). GGPP is then substrate of the diterpene cyclase eriG for the production of cyatha-3,12-diene. The cytochrome P450 monooxygenase eriI then hydroxylates cyatha-3,12-diene at C-14 of the seven-membered ring to produce erinacol, which is further hydroxylated at C-15 by the cytochrome P450 monooxygenase eriC to yield cyathadiol. The cytochrome P450 monooxygenase eriA then catalyzes C-11 hydroxylation in the presence of the short chain dehydrogenase/reductase (SDR) eriH, which leads to the production of cyathatriol. The acetyltransferase eriL converts cyathatriol into 11-O-acetyl-cyathatriol. The SDR eriH catalyzes further oxidation of 11-O-acetyl-cyathatriol into 1-O-acetylcyathin A3. Finally, the glycosyl transferase eriJ tranfers xylose from UDP-xylose onto C-14 of 11-O-acetyl-cyathatriol to form eracine Q. EriJ is also able to convert 11-O-acetyl-cyathatriol to eracine Q2 by using UDP-D-glucose as cosubstrate, but at a lower rate. This is Short-chain dehydrogenase/reductase eriH from Hericium erinaceus (Lion's mane mushroom).